We begin with the raw amino-acid sequence, 41 residues long: MKVKNSLRSLKNRHRDCRVVRRKGRVYVINKTQRKFKARQG.

This sequence belongs to the bacterial ribosomal protein bL36 family.

The polypeptide is Large ribosomal subunit protein bL36 (Ruegeria sp. (strain TM1040) (Silicibacter sp.)).